We begin with the raw amino-acid sequence, 630 residues long: Internalin B (630 aa).

A signal peptide spans 1 to 30 (MKEKHNPRRKYCLISGLAIIFSLWIIIGNG). Residues 31–76 (AKVQAETITVPTPIKQIFSDDAFAETIKDNLKKKSVTDAVTQNELN) form the LRRNT domain. LRR repeat units lie at residues 75 to 97 (LNSIDQIIANNSDIKSVQGIQYL), 98 to 121 (PNVTKLFLNGNKLTDIKPLANLKN), 123 to 141 (GWLFLDENKVKDLSSLKDL), 142 to 163 (KKLKSLSLEHNGISDINGLVHL), 164 to 187 (PQLESLYLGNNKITDITVLSRLTK), 189 to 207 (DTLSLEDNQISDIVPLAGL), and 208 to 231 (TKLQNLYLSKNHISDLRALAGLKN). The segment at 241–319 (ECLNKPINHQ…RFHGRVTQPL (79 aa)) is ig-like region. Residues 241–330 (ECLNKPINHQ…EVYTVSYDVD (90 aa)) form the LRRCT domain. Residues 320-392 (KEVYTVSYDV…TLYAVFKAET (73 aa)) are b repeat region. GW domains follow at residues 393–467 (TEKA…LDRY), 472–550 (YDKG…TFYK), and 553–630 (MEKP…RAQK). The tract at residues 399-630 (LTRYVKYIRG…TKAANLRAQK (232 aa)) is GW repeat region, necessary and sufficient for cell surface attachment, interacts with host C1QBP and with heparin.

This sequence belongs to the internalin family. As to quaternary structure, interacts via its LRR repeats plus the Ig-like region with the extracellular portion (residues 25-741) of its receptor MET; MET can bind HGF, its endogenous ligand, and InlB simultaneously. Probably forms a dimer upon interaction with host MET, which subsequently allows dimerization of the host MET and subsequent host signaling; dimerization probably occurs via the convex surface of InlB. Prevention of dimerization does not block interaction with MET but prevents downstream action.

The protein localises to the secreted. It is found in the cytoplasm. Its subcellular location is the cell membrane. In terms of biological role, mediates the entry of L.monocytogenes into normally non-phagocytic mammalian host cells. Its host receptor is hepatocyte growth factor receptor (HGF receptor, a tyrosine kinase, MET) which is tyrosine-phosphorylated in response to InlB. Downstream targets MAPK1/MAPK3 (Erk1/2) and AKT are phosphorylated in response to InlB, which also causes cell colony scattering. Complement component 1 Q subcomponent-binding protein (gC1q-R, C1QBP) has been suggested to also act an InlB receptor, but this is less certain. Stimulation of Tyr-phosphorylation of MET by InlB is potentiated by the InlB GW domains and glycosaminoglycans such as heparin. In Listeria monocytogenes serovar 1/2a (strain ATCC BAA-679 / EGD-e), this protein is Internalin B (inlB).